The chain runs to 412 residues: Phosphoglycerate kinase (412 aa).

Residues 24–26 (DLN), Arg-47, 70–73 (HLGR), Arg-130, and Arg-167 contribute to the substrate site. ATP is bound by residues Lys-217, Gly-312, Glu-343, and 369-372 (GGDS).

Belongs to the phosphoglycerate kinase family. In terms of assembly, monomer.

It is found in the cytoplasm. It carries out the reaction (2R)-3-phosphoglycerate + ATP = (2R)-3-phospho-glyceroyl phosphate + ADP. It participates in carbohydrate degradation; glycolysis; pyruvate from D-glyceraldehyde 3-phosphate: step 2/5. The protein is Phosphoglycerate kinase of Kineococcus radiotolerans (strain ATCC BAA-149 / DSM 14245 / SRS30216).